We begin with the raw amino-acid sequence, 121 residues long: Large ribosomal subunit protein uL18 (121 aa).

This sequence belongs to the universal ribosomal protein uL18 family. As to quaternary structure, part of the 50S ribosomal subunit; part of the 5S rRNA/L5/L18/L25 subcomplex. Contacts the 5S and 23S rRNAs.

Its function is as follows. This is one of the proteins that bind and probably mediate the attachment of the 5S RNA into the large ribosomal subunit, where it forms part of the central protuberance. The chain is Large ribosomal subunit protein uL18 from Leptothrix cholodnii (strain ATCC 51168 / LMG 8142 / SP-6) (Leptothrix discophora (strain SP-6)).